The following is a 306-amino-acid chain: Homoserine O-acetyltransferase (306 aa).

The active-site Acyl-thioester intermediate is C142. Substrate-binding residues include K163 and S192. Residue H235 is the Proton acceptor of the active site. The active site involves E237. Substrate is bound at residue R249.

The protein belongs to the MetA family.

It localises to the cytoplasm. It carries out the reaction L-homoserine + acetyl-CoA = O-acetyl-L-homoserine + CoA. It participates in amino-acid biosynthesis; L-methionine biosynthesis via de novo pathway; O-acetyl-L-homoserine from L-homoserine: step 1/1. In terms of biological role, transfers an acetyl group from acetyl-CoA to L-homoserine, forming acetyl-L-homoserine. The chain is Homoserine O-acetyltransferase from Brucella abortus (strain S19).